Here is a 2212-residue protein sequence, read N- to C-terminus: Nonribosomal peptide synthetase ftmPS (2212 aa).

The adenylation 1 stretch occupies residues 74–473 (TYAELDSLSD…IEHHLQQTLP (400 aa)). The 78-residue stretch at 592 to 669 (PPSTLKETTI…EQSQRAGLIQ (78 aa)) folds into the Carrier 1 domain. O-(pantetheine 4'-phosphoryl)serine is present on Ser629. The condensation 1 stretch occupies residues 708 to 973 (EDIYPCTALQ…IATVPLRIRV (266 aa)). Residues 1167–1564 (TYRELWAHSS…LSAVEASLMR (398 aa)) are adenylation 2. The region spanning 1678–1757 (PMSDDNERRL…QFRHLITEDD (80 aa)) is the Carrier 2 domain. Ser1715 carries the O-(pantetheine 4'-phosphoryl)serine modification. The interval 1815–2070 (HFQFDLSGAI…CTNYIPYRLS (256 aa)) is condensation 2.

The protein belongs to the NRP synthetase family.

The enzyme catalyses L-proline + L-tryptophan + 2 ATP = brevianamide F + 2 AMP + 2 diphosphate + 2 H(+). It functions in the pathway mycotoxin biosynthesis. Its function is as follows. Nonribosomal peptide synthetase; part of the gene cluster that mediates the biosynthesis of fumitremorgins, indole alkaloids that carry not only intriguing chemical structures, but also interesting biological and pharmacological activities. The biosynthesis of fumitremorgin-type alkaloids begins by condensation of the two amino acids L-tryptophan and L-proline to brevianamide F, catalyzed by the non-ribosomal peptide synthetase ftmPS/ftmA. Brevianamide F is then prenylated by the prenyltransferase ftmPT1/ftmB in the presence of dimethylallyl diphosphate, resulting in the formation of tryprostatin B. The three cytochrome P450 monooxygenases, ftmP450-1/ftmC, ftmP450-2/ftmE and ftmP450-3/FtmG, are responsible for the conversion of tryprostatin B to 6-hydroxytryprostatin B, tryprostatin A to fumitremorgin C and fumitremorgin C to 12,13-dihydroxyfumitremorgin C, respectively. The putative methyltransferase ftmMT/ftmD is expected for the conversion of 6-hydroxytryprostatin B to tryprostatin A. FtmPT2/FtmH catalyzes the prenylation of 12,13-dihydroxyfumitre-morgin C in the presence of dimethylallyl diphosphate, resulting in the formation of fumitremorgin B. Fumitremorgin B is further converted to verruculogen by ftmOx1/ftmF via the insertion of an endoperoxide bond between the two prenyl moieties. Finally, verruculogen is further converted to fumitremorgin A by the verruculogen prenyltransferase ftmPT3. The polypeptide is Nonribosomal peptide synthetase ftmPS (ftmPS) (Neosartorya fischeri (strain ATCC 1020 / DSM 3700 / CBS 544.65 / FGSC A1164 / JCM 1740 / NRRL 181 / WB 181) (Aspergillus fischerianus)).